Consider the following 566-residue polypeptide: Putative sensory transducer protein YvaQ (566 aa).

A signal peptide spans 1–31; the sequence is MRLTISRKFSLVFLTLILINLLVGGIGVLNM. Residues 74 to 110 are a coiled coil; sequence DKSKMDTLDQEMNQIMEDINQKLDNYEKTISTDKEQK. The chain crosses the membrane as a helical span at residues 186–206; sequence IYTALLVAASILISIFIWLYI. Residues 208–261 enclose the HAMP domain; it reads RNIVKPIIRMKESANHIAEGDLSNDMEALNSKDELGDLNEALQKMVGNLRDIVG. The Methyl-accepting transducer domain maps to 280–530; it reads ATNETRSGSK…ESAAGIEETF (251 aa). A coiled-coil region spans residues 536-566; the sequence is SAHSMDQVLLNAEELEQLANELNEKMGQFTI.

The protein belongs to the methyl-accepting chemotaxis (MCP) protein family.

It is found in the cell membrane. Functionally, chemotactic-signal transducers respond to changes in the concentration of attractants and repellents in the environment, transduce a signal from the outside to the inside of the cell, and facilitate sensory adaptation through the variation of the level of methylation. Attractants increase the level of methylation while repellents decrease the level of methylation. This is Putative sensory transducer protein YvaQ (yvaQ) from Bacillus subtilis (strain 168).